A 167-amino-acid polypeptide reads, in one-letter code: Endoribonuclease YbeY (167 aa).

Positions 126, 130, and 136 each coordinate Zn(2+).

Belongs to the endoribonuclease YbeY family. Requires Zn(2+) as cofactor.

It is found in the cytoplasm. Its function is as follows. Single strand-specific metallo-endoribonuclease involved in late-stage 70S ribosome quality control and in maturation of the 3' terminus of the 16S rRNA. This is Endoribonuclease YbeY from Novosphingobium aromaticivorans (strain ATCC 700278 / DSM 12444 / CCUG 56034 / CIP 105152 / NBRC 16084 / F199).